The following is a 62-amino-acid chain: Photosystem II reaction center protein Z (62 aa).

The next 2 membrane-spanning stretches (helical) occupy residues 8–28 (TLFALILFSFVLVVGVPVVFA) and 41–61 (LSGLGLWILLVFVVGILNSFV).

Belongs to the PsbZ family. As to quaternary structure, PSII is composed of 1 copy each of membrane proteins PsbA, PsbB, PsbC, PsbD, PsbE, PsbF, PsbH, PsbI, PsbJ, PsbK, PsbL, PsbM, PsbT, PsbY, PsbZ, Psb30/Ycf12, at least 3 peripheral proteins of the oxygen-evolving complex and a large number of cofactors. It forms dimeric complexes.

The protein resides in the plastid. It is found in the chloroplast thylakoid membrane. May control the interaction of photosystem II (PSII) cores with the light-harvesting antenna, regulates electron flow through the 2 photosystem reaction centers. PSII is a light-driven water plastoquinone oxidoreductase, using light energy to abstract electrons from H(2)O, generating a proton gradient subsequently used for ATP formation. This is Photosystem II reaction center protein Z from Stigeoclonium helveticum (Green alga).